The chain runs to 131 residues: Type 3 secretion system pilotin (131 aa).

Residues 1 to 15 (MSRIIALIISFLLVG) form the signal peptide. Cys-16 carries the N-palmitoyl cysteine lipid modification. Cys-16 carries S-diacylglycerol cysteine lipidation.

It belongs to the ExsB/YscW family. As to quaternary structure, interacts with YscC/SctC.

The protein resides in the cell outer membrane. Involved in the synthesis of the type III secretion system (T3SS), also called injectisome, which is used to inject bacterial effector proteins into eukaryotic host cells. Pilot protein that is required for the proper localization of the secretin YscC/SctC in the outer membrane. Also required for efficient oligomerization of YscC/SctC and stabilization of the oligomers. The sequence is that of Type 3 secretion system pilotin from Yersinia enterocolitica.